The following is a 205-amino-acid chain: Ribosomal RNA small subunit methyltransferase G (205 aa).

Residues Gly71, Phe76, 120-121 (IE), and Arg134 each bind S-adenosyl-L-methionine.

The protein belongs to the methyltransferase superfamily. RNA methyltransferase RsmG family.

It localises to the cytoplasm. It carries out the reaction guanosine(527) in 16S rRNA + S-adenosyl-L-methionine = N(7)-methylguanosine(527) in 16S rRNA + S-adenosyl-L-homocysteine. Functionally, specifically methylates the N7 position of guanine in position 527 of 16S rRNA. This Paramagnetospirillum magneticum (strain ATCC 700264 / AMB-1) (Magnetospirillum magneticum) protein is Ribosomal RNA small subunit methyltransferase G.